The following is a 134-amino-acid chain: UPF0412 protein YaaI (134 aa).

The N-terminal stretch at Met1–Ala23 is a signal peptide.

The protein belongs to the UPF0412 family.

This Escherichia coli (strain UTI89 / UPEC) protein is UPF0412 protein YaaI.